A 467-amino-acid chain; its full sequence is Glutamate--tRNA ligase (467 aa).

A 'HIGH' region motif is present at residues 12-22 (PSPTGYLHIGG). A compositionally biased stretch (basic and acidic residues) spans 114–128 (EQEAKKEKPRYDGRW). A disordered region spans residues 114–140 (EQEAKKEKPRYDGRWRPAPGKTLPTPP). Positions 244–248 (KLSKR) match the 'KMSKS' region motif. Lys247 lines the ATP pocket.

Belongs to the class-I aminoacyl-tRNA synthetase family. Glutamate--tRNA ligase type 1 subfamily. In terms of assembly, monomer.

The protein localises to the cytoplasm. It catalyses the reaction tRNA(Glu) + L-glutamate + ATP = L-glutamyl-tRNA(Glu) + AMP + diphosphate. Its function is as follows. Catalyzes the attachment of glutamate to tRNA(Glu) in a two-step reaction: glutamate is first activated by ATP to form Glu-AMP and then transferred to the acceptor end of tRNA(Glu). This Azoarcus sp. (strain BH72) protein is Glutamate--tRNA ligase.